A 125-amino-acid polypeptide reads, in one-letter code: uncharacterized protein (125 aa).

A helical transmembrane segment spans residues 100-120 (YFKVAFALAVLTPLAIWIFYI).

It localises to the membrane. This is an uncharacterized protein from Saccharomyces cerevisiae (strain ATCC 204508 / S288c) (Baker's yeast).